The chain runs to 136 residues: Acidic phospholipase A2 EC-I (136 aa).

The N-terminal stretch at 1 to 16 (MKTLWIVAVWLIAVEG) is a signal peptide. Cystine bridges form between C42–C129, C44–C60, C59–C111, C65–C136, C66–C104, C73–C97, and C91–C102. Residues Y43, G45, and G47 each coordinate Ca(2+). The active site involves H63. D64 contacts Ca(2+). D105 is an active-site residue. The segment at 112–133 (LGENVNTYDKKYKSYEDCTEEV) is may be responsible for inhibition of the platelet-aggregation activity.

It belongs to the phospholipase A2 family. Group II subfamily. D49 sub-subfamily. In terms of assembly, monomer. Requires Ca(2+) as cofactor. As to expression, expressed by the venom gland.

It is found in the secreted. The catalysed reaction is a 1,2-diacyl-sn-glycero-3-phosphocholine + H2O = a 1-acyl-sn-glycero-3-phosphocholine + a fatty acid + H(+). Snake venom phospholipase A2 (PLA2) that inhibits human platelet aggregation induced by ADP, collagen and epinephrin (possibly by binding the platelet receptor alpha-IIb/beta-III) and induces mild edema in the foot pads of mice. PLA2 catalyzes the calcium-dependent hydrolysis of the 2-acyl groups in 3-sn-phosphoglycerides. The chain is Acidic phospholipase A2 EC-I from Echis carinatus (Saw-scaled viper).